Consider the following 241-residue polypeptide: tRNA (guanine-N(1)-)-methyltransferase (241 aa).

S-adenosyl-L-methionine is bound by residues glycine 123 and 143–148 (IGDYVL).

Belongs to the RNA methyltransferase TrmD family. As to quaternary structure, homodimer.

Its subcellular location is the cytoplasm. It catalyses the reaction guanosine(37) in tRNA + S-adenosyl-L-methionine = N(1)-methylguanosine(37) in tRNA + S-adenosyl-L-homocysteine + H(+). Specifically methylates guanosine-37 in various tRNAs. The sequence is that of tRNA (guanine-N(1)-)-methyltransferase from Roseobacter denitrificans (strain ATCC 33942 / OCh 114) (Erythrobacter sp. (strain OCh 114)).